A 749-amino-acid chain; its full sequence is Activating signal cointegrator 1 complex subunit 2 (749 aa).

Residues 1-26 (MPALPLDQLQITHKDPKTGQPKTSAA) form a disordered region. A Phosphothreonine modification is found at T233. Residues 465 to 508 (ELDSLISQVKDLLPDLGEGFILACLEHYSYDSEQVINNILEDRL) form the CUE domain. 2 disordered regions span residues 606–675 (EDEY…QDPA) and 689–749 (LARK…MIPS). At S625 the chain carries Phosphoserine. Over residues 649–662 (VQEEEWDEEDEVEE) the composition is skewed to acidic residues. Basic and acidic residues-rich tracts occupy residues 663–675 (EAPKPDHFIQDPA) and 711–726 (QSRETTQERRKKEANK).

It belongs to the ASCC2 family. As to quaternary structure, identified in the ASCC complex that contains ASCC1, ASCC2 and ASCC3. Interacts directly with ASCC3. The ASCC complex interacts with ALKBH3. Interacts (via CUE domain) with 'Lys-63'-linked polyubiquitin chains, but not with 'Lys-48'-linked polyubiquitin chains. Part of the ASC-1 complex, that contains TRIP4, ASCC1, ASCC2 and ASCC3. Component of the RQT (ribosome quality control trigger) complex, that contains ASCC2, ASCC3 and TRIP4. Interacts with CSRP1. Interacts with PRPF8, a component of the spliceosome. Interacts with ZCCHC4.

It is found in the nucleus. It localises to the nucleus speckle. In terms of biological role, ubiquitin-binding protein involved in DNA repair and rescue of stalled ribosomes. Plays a role in DNA damage repair as component of the ASCC complex. Recruits ASCC3 and ALKBH3 to sites of DNA damage by binding to polyubiquitinated proteins that have 'Lys-63'-linked polyubiquitin chains. Part of the ASC-1 complex that enhances NF-kappa-B, SRF and AP1 transactivation. Involved in activation of the ribosome quality control (RQC) pathway, a pathway that degrades nascent peptide chains during problematic translation. Specifically recognizes and binds RPS20/uS10 ubiquitinated by ZNF598, promoting recruitment of the RQT (ribosome quality control trigger) complex on stalled ribosomes, followed by disassembly of stalled ribosomes. In Mus musculus (Mouse), this protein is Activating signal cointegrator 1 complex subunit 2 (Ascc2).